A 388-amino-acid chain; its full sequence is Succinate--CoA ligase [ADP-forming] subunit beta (388 aa).

The ATP-grasp domain maps to 9-244; sequence KALFAEYGLP…PSQDDAREAH (236 aa). ATP contacts are provided by residues K46, 53–55, E99, T102, and E107; that span reads GRG. Residues N199 and D213 each coordinate Mg(2+). Substrate is bound by residues N264 and 321-323; that span reads GIV.

It belongs to the succinate/malate CoA ligase beta subunit family. As to quaternary structure, heterotetramer of two alpha and two beta subunits. The cofactor is Mg(2+).

It catalyses the reaction succinate + ATP + CoA = succinyl-CoA + ADP + phosphate. The enzyme catalyses GTP + succinate + CoA = succinyl-CoA + GDP + phosphate. Its pathway is carbohydrate metabolism; tricarboxylic acid cycle; succinate from succinyl-CoA (ligase route): step 1/1. Succinyl-CoA synthetase functions in the citric acid cycle (TCA), coupling the hydrolysis of succinyl-CoA to the synthesis of either ATP or GTP and thus represents the only step of substrate-level phosphorylation in the TCA. The beta subunit provides nucleotide specificity of the enzyme and binds the substrate succinate, while the binding sites for coenzyme A and phosphate are found in the alpha subunit. In Shewanella sediminis (strain HAW-EB3), this protein is Succinate--CoA ligase [ADP-forming] subunit beta.